The primary structure comprises 301 residues: Transposase InsD for insertion element IS2D (301 aa).

In terms of domain architecture, Integrase catalytic spans 106–289 (KPAVPPSKRA…SPREYLRQRA (184 aa)).

Functionally, involved in the transposition of the insertion sequence IS2. The sequence is that of Transposase InsD for insertion element IS2D (insD2) from Escherichia coli (strain K12).